The following is a 630-amino-acid chain: NUAK family SNF1-like kinase 2 (630 aa).

An N-acetylmethionine modification is found at Met-1. Residues Tyr-57–Val-307 form the Protein kinase domain. ATP-binding positions include Leu-63 to Val-71 and Lys-85. Asp-179 serves as the catalytic Proton acceptor. Thr-212 is subject to Phosphothreonine. Disordered stretches follow at residues His-361–Arg-504 and Gly-521–Pro-566. Residues Ser-464 to Gly-476 are compositionally biased toward low complexity. Phosphoserine occurs at positions 529, 550, 553, and 579.

Belongs to the protein kinase superfamily. CAMK Ser/Thr protein kinase family. SNF1 subfamily. Requires Mg(2+) as cofactor. Post-translationally, phosphorylated at Thr-212 by STK11/LKB1 in complex with STE20-related adapter-alpha (STRADA) pseudo kinase and CAB39. Autophosphorylation is also possible at Thr-212. As to expression, expressed in liver, skin, testis, uterus, ovary, adrenal gland and brain (at protein level). Expressed in kidney, heart, skin, spleen, lung, uterus, liver and the exocrine and endocrine compartments of the human pancreas. A kinase-inactive isoform also appears to be expressed in the skin, spleen, lung, uterus, liver and testis.

It carries out the reaction L-seryl-[protein] + ATP = O-phospho-L-seryl-[protein] + ADP + H(+). The catalysed reaction is L-threonyl-[protein] + ATP = O-phospho-L-threonyl-[protein] + ADP + H(+). With respect to regulation, activated by phosphorylation on Thr-212 by STK11 in complex with STE20-related adapter-alpha (STRAD alpha) pseudo kinase and CAB39. In terms of biological role, stress-activated kinase involved in tolerance to glucose starvation. Induces cell-cell detachment by increasing F-actin conversion to G-actin. Expression is induced by CD95 or TNF-alpha, via NF-kappa-B. Protects cells from CD95-mediated apoptosis and is required for the increased motility and invasiveness of CD95-activated tumor cells. Phosphorylates LATS1 and LATS2. Plays a key role in neural tube closure during embryonic development through LATS2 phosphorylation and regulation of the nuclear localization of YAP1 a critical downstream regulatory target in the Hippo signaling pathway. This is NUAK family SNF1-like kinase 2 from Rattus norvegicus (Rat).